The following is a 322-amino-acid chain: Ribonucleoside-diphosphate reductase subunit beta nrdF1 (322 aa).

Residues Asp70, Glu101, and His104 each contribute to the Fe cation site. Tyr108 is a catalytic residue. Positions 161, 195, and 198 each coordinate Fe cation.

It belongs to the ribonucleoside diphosphate reductase small chain family. As to quaternary structure, tetramer of two alpha and two beta subunits. Requires Fe cation as cofactor.

It carries out the reaction a 2'-deoxyribonucleoside 5'-diphosphate + [thioredoxin]-disulfide + H2O = a ribonucleoside 5'-diphosphate + [thioredoxin]-dithiol. In terms of biological role, provides the precursors necessary for DNA synthesis. Catalyzes the biosynthesis of deoxyribonucleotides from the corresponding ribonucleotides. The chain is Ribonucleoside-diphosphate reductase subunit beta nrdF1 (nrdF1) from Mycobacterium tuberculosis (strain CDC 1551 / Oshkosh).